The sequence spans 165 residues: Nucleotide-binding protein P9211_04811 (165 aa).

Belongs to the YajQ family.

Its function is as follows. Nucleotide-binding protein. This chain is Nucleotide-binding protein P9211_04811, found in Prochlorococcus marinus (strain MIT 9211).